Consider the following 176-residue polypeptide: Cytochrome b (176 aa).

The next 3 helical transmembrane spans lie at 33–53 (FGSL…FLAM), 77–98 (WLLR…YLHV), and 113–133 (WNVG…GYVL). Positions 83 and 97 each coordinate heme b.

This sequence belongs to the cytochrome b family. As to quaternary structure, the cytochrome bc1 complex contains 11 subunits: 3 respiratory subunits (MT-CYB, CYC1 and UQCRFS1), 2 core proteins (UQCRC1 and UQCRC2) and 6 low-molecular weight proteins (UQCRH/QCR6, UQCRB/QCR7, UQCRQ/QCR8, UQCR10/QCR9, UQCR11/QCR10 and a cleavage product of UQCRFS1). This cytochrome bc1 complex then forms a dimer. The cofactor is heme b.

Its subcellular location is the mitochondrion inner membrane. Functionally, component of the ubiquinol-cytochrome c reductase complex (complex III or cytochrome b-c1 complex) that is part of the mitochondrial respiratory chain. The b-c1 complex mediates electron transfer from ubiquinol to cytochrome c. Contributes to the generation of a proton gradient across the mitochondrial membrane that is then used for ATP synthesis. This chain is Cytochrome b (MT-CYB), found in Tadarida brasiliensis (Brazilian free-tailed bat).